We begin with the raw amino-acid sequence, 292 residues long: NAD kinase (292 aa).

The Proton acceptor role is filled by Asp-73. Residues 73-74 (DG), 147-148 (NE), His-158, Arg-175, Asp-177, 188-193 (TAYSLS), and Gln-247 contribute to the NAD(+) site.

It belongs to the NAD kinase family. The cofactor is a divalent metal cation.

Its subcellular location is the cytoplasm. It catalyses the reaction NAD(+) + ATP = ADP + NADP(+) + H(+). Functionally, involved in the regulation of the intracellular balance of NAD and NADP, and is a key enzyme in the biosynthesis of NADP. Catalyzes specifically the phosphorylation on 2'-hydroxyl of the adenosine moiety of NAD to yield NADP. This Escherichia coli (strain UTI89 / UPEC) protein is NAD kinase.